A 252-amino-acid chain; its full sequence is tRNA pseudouridine synthase A (252 aa).

The active-site Nucleophile is Asp52. Tyr110 contacts substrate.

It belongs to the tRNA pseudouridine synthase TruA family. As to quaternary structure, homodimer.

It catalyses the reaction uridine(38/39/40) in tRNA = pseudouridine(38/39/40) in tRNA. Functionally, formation of pseudouridine at positions 38, 39 and 40 in the anticodon stem and loop of transfer RNAs. The protein is tRNA pseudouridine synthase A of Syntrophotalea carbinolica (strain DSM 2380 / NBRC 103641 / GraBd1) (Pelobacter carbinolicus).